A 146-amino-acid polypeptide reads, in one-letter code: Cytidine deaminase (146 aa).

The CMP/dCMP-type deaminase domain maps to 13-140; sequence EHVQRLLLSS…ELLPASFGPE (128 aa). Residue 54 to 56 participates in substrate binding; it reads NIE. Cysteine 65 is a binding site for Zn(2+). Glutamate 67 acts as the Proton donor in catalysis. 2 residues coordinate Zn(2+): cysteine 99 and cysteine 102.

This sequence belongs to the cytidine and deoxycytidylate deaminase family. In terms of assembly, homotetramer. It depends on Zn(2+) as a cofactor.

It catalyses the reaction cytidine + H2O + H(+) = uridine + NH4(+). The catalysed reaction is 2'-deoxycytidine + H2O + H(+) = 2'-deoxyuridine + NH4(+). In terms of biological role, this enzyme scavenges exogenous and endogenous cytidine and 2'-deoxycytidine for UMP synthesis. This is Cytidine deaminase (Cda) from Mus musculus (Mouse).